A 240-amino-acid polypeptide reads, in one-letter code: Ribonuclease PH (240 aa).

Phosphate-binding positions include arginine 87 and 125–127 (GTR).

This sequence belongs to the RNase PH family. In terms of assembly, homohexameric ring arranged as a trimer of dimers.

It catalyses the reaction tRNA(n+1) + phosphate = tRNA(n) + a ribonucleoside 5'-diphosphate. In terms of biological role, phosphorolytic 3'-5' exoribonuclease that plays an important role in tRNA 3'-end maturation. Removes nucleotide residues following the 3'-CCA terminus of tRNAs; can also add nucleotides to the ends of RNA molecules by using nucleoside diphosphates as substrates, but this may not be physiologically important. Probably plays a role in initiation of 16S rRNA degradation (leading to ribosome degradation) during starvation. The polypeptide is Ribonuclease PH (Dictyoglomus turgidum (strain DSM 6724 / Z-1310)).